The sequence spans 283 residues: Endochitinase At2g43620 (283 aa).

Positions methionine 1–serine 28 are cleaved as a signal peptide. Residues glutamine 29–serine 66 form the Chitin-binding type-1 domain. 4 disulfides stabilise this stretch: cysteine 31–cysteine 42, cysteine 36–cysteine 48, cysteine 41–cysteine 55, and cysteine 59–cysteine 64. The segment at aspartate 88–cysteine 283 is catalytic. The active-site Proton donor is the glutamate 150. Residue asparagine 280 is glycosylated (N-linked (GlcNAc...) asparagine).

It belongs to the glycosyl hydrolase 19 family. Chitinase class I subfamily.

The catalysed reaction is Random endo-hydrolysis of N-acetyl-beta-D-glucosaminide (1-&gt;4)-beta-linkages in chitin and chitodextrins.. The sequence is that of Endochitinase At2g43620 from Arabidopsis thaliana (Mouse-ear cress).